The sequence spans 184 residues: Photosystem I assembly protein Ycf4 (184 aa).

2 helical membrane passes run 19–39 (ISNF…LLVG) and 57–77 (IIFF…LFIS).

This sequence belongs to the Ycf4 family.

The protein localises to the plastid. It is found in the chloroplast thylakoid membrane. Functionally, seems to be required for the assembly of the photosystem I complex. The sequence is that of Photosystem I assembly protein Ycf4 from Solanum bulbocastanum (Wild potato).